Consider the following 126-residue polypeptide: Desulfoferrodoxin (126 aa).

Residues cysteine 10, cysteine 13, cysteine 29, cysteine 30, histidine 49, histidine 69, histidine 75, cysteine 116, and histidine 119 each contribute to the Fe cation site.

It belongs to the desulfoferrodoxin family. Homodimer. It depends on Fe(3+) as a cofactor. Cu(2+) is required as a cofactor.

The enzyme catalyses reduced [rubredoxin] + superoxide + 2 H(+) = oxidized [rubredoxin] + H2O2. In terms of biological role, catalyzes the one-electron reduction of superoxide anion radical to hydrogen peroxide at a nonheme ferrous iron center. Plays a fundamental role in case of oxidative stress via its superoxide detoxification activity. The polypeptide is Desulfoferrodoxin (dfx) (Nitratidesulfovibrio vulgaris (strain ATCC 29579 / DSM 644 / CCUG 34227 / NCIMB 8303 / VKM B-1760 / Hildenborough) (Desulfovibrio vulgaris)).